Here is a 152-residue protein sequence, read N- to C-terminus: Large ribosomal subunit protein bL9 (152 aa).

Belongs to the bacterial ribosomal protein bL9 family.

Its function is as follows. Binds to the 23S rRNA. This chain is Large ribosomal subunit protein bL9, found in Gloeothece citriformis (strain PCC 7424) (Cyanothece sp. (strain PCC 7424)).